Reading from the N-terminus, the 515-residue chain is Protein disulfide-isomerase (515 aa).

Positions 1–25 (MAISKVWISLLLALAVVLSAPAARA) are cleaved as a signal peptide. The region spanning 26 to 150 (EEAAAAEEAA…IVEYLKKQVG (125 aa)) is the Thioredoxin 1 domain. Active-site nucleophile residues include C68 and C71. A disulfide bridge connects residues C68 and C71. N283 carries an N-linked (GlcNAc...) asparagine glycan. The 144-residue stretch at 346–489 (LKEQVEAGQI…IVDYIKKNKE (144 aa)) folds into the Thioredoxin 2 domain. Catalysis depends on nucleophile residues C412 and C415. The cysteines at positions 412 and 415 are disulfide-linked. A compositionally biased stretch (low complexity) spans 494–509 (AAAAATEKAAEPAATE). The disordered stretch occupies residues 494 to 515 (AAAAATEKAAEPAATEPLKDEL). The Prevents secretion from ER motif lies at 512 to 515 (KDEL).

The protein belongs to the protein disulfide isomerase family.

It is found in the endoplasmic reticulum lumen. It carries out the reaction Catalyzes the rearrangement of -S-S- bonds in proteins.. In terms of biological role, participates in the folding of proteins containing disulfide bonds, may be involved in glycosylation, prolyl hydroxylation and triglyceride transfer. In Triticum aestivum (Wheat), this protein is Protein disulfide-isomerase (PDI).